A 391-amino-acid chain; its full sequence is S-adenosylmethionine synthase (391 aa).

His-14 is an ATP binding site. Asp-16 contributes to the Mg(2+) binding site. Glu-42 contacts K(+). L-methionine is bound by residues Glu-55 and Gln-98. The tract at residues 98 to 108 (QSVDIAIGVDE) is flexible loop. Residues 172–174 (DGK), 238–239 (RF), Asp-247, 253–254 (RK), Ala-270, and Lys-274 contribute to the ATP site. An L-methionine-binding site is contributed by Asp-247. L-methionine is bound at residue Lys-278.

The protein belongs to the AdoMet synthase family. As to quaternary structure, homotetramer; dimer of dimers. Mg(2+) serves as cofactor. It depends on K(+) as a cofactor.

It is found in the cytoplasm. It catalyses the reaction L-methionine + ATP + H2O = S-adenosyl-L-methionine + phosphate + diphosphate. Its pathway is amino-acid biosynthesis; S-adenosyl-L-methionine biosynthesis; S-adenosyl-L-methionine from L-methionine: step 1/1. Its function is as follows. Catalyzes the formation of S-adenosylmethionine (AdoMet) from methionine and ATP. The overall synthetic reaction is composed of two sequential steps, AdoMet formation and the subsequent tripolyphosphate hydrolysis which occurs prior to release of AdoMet from the enzyme. The polypeptide is S-adenosylmethionine synthase (Clostridium botulinum (strain Okra / Type B1)).